Reading from the N-terminus, the 349-residue chain is Core protein VP7 (349 aa).

N-linked (GlcNAc...) asparagine; by host glycosylation occurs at asparagine 287.

Belongs to the orbivirus VP7 family. As to quaternary structure, homotrimer that assemble in a complex of 260 capsomers on an inner scaffold composed of VP3.

The protein localises to the virion. Functionally, the VP7 protein is one of the five proteins (with VP1, VP3, VP4, and VP6) which form the inner capsid of the virus. The chain is Core protein VP7 (Segment-7) from Antilocapra americana (Pronghorn).